A 346-amino-acid polypeptide reads, in one-letter code: Phosphoribosylformylglycinamidine cyclo-ligase (346 aa).

This sequence belongs to the AIR synthase family.

The protein resides in the cytoplasm. The enzyme catalyses 2-formamido-N(1)-(5-O-phospho-beta-D-ribosyl)acetamidine + ATP = 5-amino-1-(5-phospho-beta-D-ribosyl)imidazole + ADP + phosphate + H(+). The protein operates within purine metabolism; IMP biosynthesis via de novo pathway; 5-amino-1-(5-phospho-D-ribosyl)imidazole from N(2)-formyl-N(1)-(5-phospho-D-ribosyl)glycinamide: step 2/2. This Shewanella piezotolerans (strain WP3 / JCM 13877) protein is Phosphoribosylformylglycinamidine cyclo-ligase.